A 200-amino-acid chain; its full sequence is Probable GTP-binding protein EngB (200 aa).

Residues 22–199 form the EngB-type G domain; it reads GLDEIALAGR…KDWIQARLYE (178 aa). GTP contacts are provided by residues 30 to 37, 57 to 61, 78 to 81, 145 to 148, and 178 to 180; these read GRSNVGKS, GKTQT, DVPG, TKMD, and FSS. Mg(2+) contacts are provided by S37 and T59.

Belongs to the TRAFAC class TrmE-Era-EngA-EngB-Septin-like GTPase superfamily. EngB GTPase family. Requires Mg(2+) as cofactor.

Necessary for normal cell division and for the maintenance of normal septation. The protein is Probable GTP-binding protein EngB of Lactobacillus delbrueckii subsp. bulgaricus (strain ATCC 11842 / DSM 20081 / BCRC 10696 / JCM 1002 / NBRC 13953 / NCIMB 11778 / NCTC 12712 / WDCM 00102 / Lb 14).